Reading from the N-terminus, the 717-residue chain is Translation initiation factor eIF2B subunit epsilon (717 aa).

The span at 1 to 14 (MAATAAVPGAAAGR) shows a compositional bias: low complexity. The segment at 1–37 (MAATAAVPGAAAGRASKRGGGGSGGGGTQGAEEEPPP) is disordered. Arg18 carries the post-translational modification Omega-N-methylarginine. The segment covering 18-29 (RGGGGSGGGGTQ) has biased composition (gly residues). Ser23 carries the post-translational modification Phosphoserine. Residues Lys57 and Lys99 each participate in a glycyl lysine isopeptide (Lys-Gly) (interchain with G-Cter in ubiquitin) cross-link. Ser126 is subject to Phosphoserine. Glycyl lysine isopeptide (Lys-Gly) (interchain with G-Cter in ubiquitin) cross-links involve residues Lys137 and Lys213. Position 318 is a phosphothreonine (Thr318). Residues 442–479 (GSVISLHPPDAEEDEDDGQFSDDSGADQEKEKVKLKGY) are disordered. Phosphoserine occurs at positions 446, 462, and 465. Residues 452–467 (AEEDEDDGQFSDDSGA) show a composition bias toward acidic residues. Lys501 participates in a covalent cross-link: Glycyl lysine isopeptide (Lys-Gly) (interchain with G-Cter in ubiquitin). The disordered stretch occupies residues 517 to 538 (TEEESETESEGSVDPEELDSRA). Over residues 519-533 (EESETESEGSVDPEE) the composition is skewed to acidic residues. A phosphoserine mark is found at Ser528 and Ser536. In terms of domain architecture, W2 spans 539-716 (GSPQLDDIRV…REAEEESSED (178 aa)). Phosphoserine; by DYRK2 is present on Ser540. Ser713 is modified (phosphoserine).

The protein belongs to the eIF-2B gamma/epsilon subunits family. Component of the translation initiation factor 2B (eIF2B) complex which is a heterodecamer of two sets of five different subunits: alpha, beta, gamma, delta and epsilon. Subunits alpha, beta and delta comprise a regulatory subcomplex and subunits epsilon and gamma comprise a catalytic subcomplex. Within the complex, the hexameric regulatory complex resides at the center, with the two heterodimeric catalytic subcomplexes bound on opposite sides. In terms of processing, phosphorylated at Ser-540 by DYRK2; this is required for subsequent phosphorylation by GSK3B. Phosphorylated on serine and threonine residues by GSK3B; phosphorylation inhibits its function. Post-translationally, polyubiquitinated, probably by NEDD4.

It localises to the cytoplasm. The protein localises to the cytosol. Its activity is regulated as follows. Activated by the chemical integrated stress response (ISR) inhibitor ISRIB which stimulates guanine nucleotide exchange factor activity for both phosphorylated and unphosphorylated eIF2. Its function is as follows. Acts as a component of the translation initiation factor 2B (eIF2B) complex, which catalyzes the exchange of GDP for GTP on eukaryotic initiation factor 2 (eIF2) gamma subunit. Its guanine nucleotide exchange factor activity is repressed when bound to eIF2 complex phosphorylated on the alpha subunit, thereby limiting the amount of methionyl-initiator methionine tRNA available to the ribosome and consequently global translation is repressed. This chain is Translation initiation factor eIF2B subunit epsilon (Eif2b5), found in Mus musculus (Mouse).